Here is a 536-residue protein sequence, read N- to C-terminus: Chaperonin GroEL (536 aa).

ATP-binding positions include 29–32 (TLGP), 86–90 (DGTTT), Gly-413, and Asp-494.

It belongs to the chaperonin (HSP60) family. As to quaternary structure, forms a cylinder of 14 subunits composed of two heptameric rings stacked back-to-back. Interacts with the co-chaperonin GroES.

The protein localises to the cytoplasm. The catalysed reaction is ATP + H2O + a folded polypeptide = ADP + phosphate + an unfolded polypeptide.. In terms of biological role, together with its co-chaperonin GroES, plays an essential role in assisting protein folding. The GroEL-GroES system forms a nano-cage that allows encapsulation of the non-native substrate proteins and provides a physical environment optimized to promote and accelerate protein folding. This chain is Chaperonin GroEL, found in Acholeplasma laidlawii (strain PG-8A).